Reading from the N-terminus, the 286-residue chain is tRNA dimethylallyltransferase (286 aa).

The segment at 18 to 21 (DSMQ) is interaction with substrate tRNA.

The protein belongs to the IPP transferase family. In terms of assembly, monomer. Mg(2+) is required as a cofactor.

It catalyses the reaction adenosine(37) in tRNA + dimethylallyl diphosphate = N(6)-dimethylallyladenosine(37) in tRNA + diphosphate. Its function is as follows. Catalyzes the transfer of a dimethylallyl group onto the adenine at position 37 in tRNAs that read codons beginning with uridine, leading to the formation of N6-(dimethylallyl)adenosine (i(6)A). This chain is tRNA dimethylallyltransferase, found in Tropheryma whipplei (strain TW08/27) (Whipple's bacillus).